The chain runs to 157 residues: Galactose-specific lectin (157 aa).

The region spanning 12 to 157 (SIVVGTWGAE…LDYIGFHLAL (146 aa)) is the Jacalin-type lectin domain. Residue Asn-45 is glycosylated (N-linked (GlcNAc...) asparagine).

It belongs to the jacalin lectin family. As to quaternary structure, tetramer of heterodimers of light and heavy chains which are non-covalently linked. In terms of processing, N-linked carbohydrates at Asn-45 can be of complex or paucimannose type.

Alpha-D-galactose-specific lectin. Has hemagglutinating activity towards human and rabbit erythrocytes. Is highly cytotoxic to human cells in vitro. The sequence is that of Galactose-specific lectin from Morus indica (Mulberry).